Reading from the N-terminus, the 182-residue chain is RNA chaperone ProQ (182 aa).

The disordered stretch occupies residues 125–160 (EQRKEQRKDFFKKKAREERNAKTMNKAVKKGSPKKD).

This sequence belongs to the ProQ family.

Its subcellular location is the cytoplasm. In terms of biological role, RNA chaperone with significant RNA binding, RNA strand exchange and RNA duplexing activities. This is RNA chaperone ProQ from Haemophilus ducreyi (strain 35000HP / ATCC 700724).